We begin with the raw amino-acid sequence, 445 residues long: tRNA modification GTPase MnmE (445 aa).

3 residues coordinate (6S)-5-formyl-5,6,7,8-tetrahydrofolate: R24, E81, and K121. Positions 218 to 369 constitute a TrmE-type G domain; the sequence is GLTVVIAGPP…LLEALVGFAR (152 aa). Residues 228–233, 247–253, 272–275, and 350–352 contribute to the GTP site; these read NAGKST, SPHAGTT, DTAG, and SAR. Mg(2+) is bound by residues S232 and T253. (6S)-5-formyl-5,6,7,8-tetrahydrofolate is bound at residue K445.

It belongs to the TRAFAC class TrmE-Era-EngA-EngB-Septin-like GTPase superfamily. TrmE GTPase family. As to quaternary structure, homodimer. Heterotetramer of two MnmE and two MnmG subunits. The cofactor is K(+).

The protein resides in the cytoplasm. Functionally, exhibits a very high intrinsic GTPase hydrolysis rate. Involved in the addition of a carboxymethylaminomethyl (cmnm) group at the wobble position (U34) of certain tRNAs, forming tRNA-cmnm(5)s(2)U34. The chain is tRNA modification GTPase MnmE from Bradyrhizobium sp. (strain BTAi1 / ATCC BAA-1182).